Reading from the N-terminus, the 406-residue chain is MLLAEIISVGTELLLGEIVDSNAAFLARELAARGITLHRKVVLGDNLKRLAEGLRTALARADLVIVGGGLGPTDDDLTREAIAEVLEETPTEDPALLAWLEGLYAARGRPMPQVNRKQAWLIPSAQALPNPVGTAPGWFVRTGGKIIVALPGPPRELQRMWREQVLPRLPLPDHALFAVTLHTQGIGESNIAELLGDLTKAANPSVATYARQTGVDVRVAASAPTAEEARALAAPVLDTVRHILARWIWGEDGDTLAGAVTQTLGGRTLGVIEAGSGGALCLLLADQPGFLDAAVTVDHARLITLGLTPVTLGSVGVVSEAAARELAAGAREHLGAEVGLAVVTATAGEQAGQAFVALSAENAENVAHVNWPGDPAQIRERAAVAALALAYRTLRLPQPSGKAGHA.

It belongs to the CinA family.

The sequence is that of CinA-like protein from Deinococcus geothermalis (strain DSM 11300 / CIP 105573 / AG-3a).